The following is a 261-amino-acid chain: Polyamine aminopropyltransferase (261 aa).

Positions 1-219 (MHPFRRRVRP…AVMAFRQSPS (219 aa)) constitute a PABS domain. Residues Asp-96 and 124 to 125 (DG) contribute to the S-methyl-5'-thioadenosine site. The active-site Proton acceptor is the Asp-142.

It belongs to the spermidine/spermine synthase family. In terms of assembly, homodimer or homotetramer.

It localises to the cytoplasm. The enzyme catalyses S-adenosyl 3-(methylsulfanyl)propylamine + putrescine = S-methyl-5'-thioadenosine + spermidine + H(+). It functions in the pathway amine and polyamine biosynthesis; spermidine biosynthesis; spermidine from putrescine: step 1/1. Functionally, catalyzes the irreversible transfer of a propylamine group from the amino donor S-adenosylmethioninamine (decarboxy-AdoMet) to putrescine (1,4-diaminobutane) to yield spermidine. The protein is Polyamine aminopropyltransferase of Chromobacterium violaceum (strain ATCC 12472 / DSM 30191 / JCM 1249 / CCUG 213 / NBRC 12614 / NCIMB 9131 / NCTC 9757 / MK).